The following is a 237-amino-acid chain: Ribonuclease PH (237 aa).

Phosphate contacts are provided by residues Arg-86 and Gly-124–Arg-126.

Belongs to the RNase PH family. Homohexameric ring arranged as a trimer of dimers.

It carries out the reaction tRNA(n+1) + phosphate = tRNA(n) + a ribonucleoside 5'-diphosphate. In terms of biological role, phosphorolytic 3'-5' exoribonuclease that plays an important role in tRNA 3'-end maturation. Removes nucleotide residues following the 3'-CCA terminus of tRNAs; can also add nucleotides to the ends of RNA molecules by using nucleoside diphosphates as substrates, but this may not be physiologically important. Probably plays a role in initiation of 16S rRNA degradation (leading to ribosome degradation) during starvation. This chain is Ribonuclease PH, found in Pseudoalteromonas translucida (strain TAC 125).